The following is a 103-amino-acid chain: Large ribosomal subunit protein bL21 (103 aa).

The protein belongs to the bacterial ribosomal protein bL21 family. As to quaternary structure, part of the 50S ribosomal subunit. Contacts protein L20.

Functionally, this protein binds to 23S rRNA in the presence of protein L20. This chain is Large ribosomal subunit protein bL21, found in Desulfitobacterium hafniense (strain DSM 10664 / DCB-2).